The sequence spans 340 residues: Phosphate acyltransferase (340 aa).

Belongs to the PlsX family. As to quaternary structure, homodimer. Probably interacts with PlsY.

It localises to the cytoplasm. The enzyme catalyses a fatty acyl-[ACP] + phosphate = an acyl phosphate + holo-[ACP]. Its pathway is lipid metabolism; phospholipid metabolism. In terms of biological role, catalyzes the reversible formation of acyl-phosphate (acyl-PO(4)) from acyl-[acyl-carrier-protein] (acyl-ACP). This enzyme utilizes acyl-ACP as fatty acyl donor, but not acyl-CoA. In Pseudomonas savastanoi pv. phaseolicola (strain 1448A / Race 6) (Pseudomonas syringae pv. phaseolicola (strain 1448A / Race 6)), this protein is Phosphate acyltransferase.